The chain runs to 116 residues: Putative UPF0320 protein YJR162C (116 aa).

This sequence belongs to the UPF0320 family.

The sequence is that of Putative UPF0320 protein YJR162C from Saccharomyces cerevisiae (strain ATCC 204508 / S288c) (Baker's yeast).